Reading from the N-terminus, the 179-residue chain is ADP-ribosylation factor-like protein 5A (179 aa).

Gly2 is lipidated: N-myristoyl glycine. GTP is bound by residues Gly23 to Thr30, Asp66 to Gln70, Asn125 to Asp128, and Ala159.

Belongs to the small GTPase superfamily. Arf family.

Functionally, lacks ADP-ribosylation enhancing activity. In Bos taurus (Bovine), this protein is ADP-ribosylation factor-like protein 5A (ARL5A).